Reading from the N-terminus, the 452-residue chain is Elongation factor Tu, mitochondrial (452 aa).

The N-terminal 43 residues, 1–43, are a transit peptide targeting the mitochondrion; sequence MAAATLLRATPRFSGLCASPTPFLQGRLRPLKAPASPFLCRGL. The region spanning 55 to 251 is the tr-type G domain; it reads KPHVNVGTIG…AVDTYIPVPT (197 aa). The tract at residues 64–71 is G1; the sequence is GHVDHGKT. Asp-67, Gly-69, Lys-70, Thr-71, and Thr-72 together coordinate GTP. Thr-71 contacts Mg(2+). Lys-79 carries the post-translational modification N6-acetyllysine. Lys-88 carries the N6-acetyllysine; alternate modification. An N6-succinyllysine; alternate modification is found at Lys-88. A G2 region spans residues 105–109; the sequence is GITIN. The interval 126–129 is G3; it reads DCPG. GTP-binding residues include Asn-181, Asp-184, Ser-219, Ala-220, and Leu-221. The G4 stretch occupies residues 181–184; the sequence is NKAD. The G5 stretch occupies residues 219 to 221; the sequence is SAL. Lys-234 carries the N6-succinyllysine modification. Residue Lys-256 is modified to N6-acetyllysine. Thr-278 bears the Phosphothreonine mark. At Lys-286 the chain carries N6-succinyllysine. Ser-312 is modified (phosphoserine). An N6-acetyllysine mark is found at Lys-361 and Lys-418.

It belongs to the TRAFAC class translation factor GTPase superfamily. Classic translation factor GTPase family. EF-Tu/EF-1A subfamily. In terms of assembly, interacts with NLRX1. Interacts with ATG16L1.

The protein localises to the mitochondrion. It catalyses the reaction GTP + H2O = GDP + phosphate + H(+). In terms of biological role, GTP hydrolase that promotes the GTP-dependent binding of aminoacyl-tRNA to the A-site of ribosomes during protein biosynthesis. Also plays a role in the regulation of autophagy and innate immunity. Recruits ATG5-ATG12 and NLRX1 at mitochondria and serves as a checkpoint of the RIGI-MAVS pathway. In turn, inhibits RLR-mediated type I interferon while promoting autophagy. This Mus musculus (Mouse) protein is Elongation factor Tu, mitochondrial (Tufm).